We begin with the raw amino-acid sequence, 339 residues long: Anthranilate phosphoribosyltransferase (339 aa).

5-phospho-alpha-D-ribose 1-diphosphate is bound by residues glycine 78, glycine 81–aspartate 82, threonine 86, asparagine 88–threonine 91, lysine 106–serine 114, and serine 118. An anthranilate-binding site is contributed by glycine 78. Residue serine 90 participates in Mg(2+) binding. Asparagine 109 lines the anthranilate pocket. Arginine 164 serves as a coordination point for anthranilate. Mg(2+)-binding residues include aspartate 225 and glutamate 226. Residues threonine 248 to alanine 265 show a composition bias toward basic and acidic residues. The interval threonine 248–threonine 271 is disordered.

Belongs to the anthranilate phosphoribosyltransferase family. In terms of assembly, homodimer. Mg(2+) is required as a cofactor.

The enzyme catalyses N-(5-phospho-beta-D-ribosyl)anthranilate + diphosphate = 5-phospho-alpha-D-ribose 1-diphosphate + anthranilate. It functions in the pathway amino-acid biosynthesis; L-tryptophan biosynthesis; L-tryptophan from chorismate: step 2/5. Catalyzes the transfer of the phosphoribosyl group of 5-phosphorylribose-1-pyrophosphate (PRPP) to anthranilate to yield N-(5'-phosphoribosyl)-anthranilate (PRA). This Methanopyrus kandleri (strain AV19 / DSM 6324 / JCM 9639 / NBRC 100938) protein is Anthranilate phosphoribosyltransferase.